Here is a 413-residue protein sequence, read N- to C-terminus: PCI domain-containing protein 2 homolog (413 aa).

The region spanning 222 to 403 (VAYNYFLGRK…QKLVISKTNA (182 aa)) is the PCI domain.

This sequence belongs to the CSN12 family.

This Caenorhabditis briggsae protein is PCI domain-containing protein 2 homolog.